Consider the following 179-residue polypeptide: Trypsin inhibitor (179 aa).

A Pyrrolidone carboxylic acid modification is found at Gln1. 2 cysteine pairs are disulfide-bonded: Cys40-Cys85 and Cys132-Cys143.

This sequence belongs to the protease inhibitor I3 (leguminous Kunitz-type inhibitor) family. Heterodimer of an alpha and a beta chain linked by a disulfide bond. In terms of tissue distribution, abundant in dry seeds.

The protein resides in the secreted. Functionally, inhibits trypsin, plasmin, human plasma kallikrein, chymotrypsin and factor XIIa activity. This is Trypsin inhibitor from Leucaena leucocephala (White popinac).